Here is a 476-residue protein sequence, read N- to C-terminus: Glycogen synthase (476 aa).

Lys-15 contacts ADP-alpha-D-glucose.

Belongs to the glycosyltransferase 1 family. Bacterial/plant glycogen synthase subfamily.

It catalyses the reaction [(1-&gt;4)-alpha-D-glucosyl](n) + ADP-alpha-D-glucose = [(1-&gt;4)-alpha-D-glucosyl](n+1) + ADP + H(+). Its pathway is glycan biosynthesis; glycogen biosynthesis. In terms of biological role, synthesizes alpha-1,4-glucan chains using ADP-glucose. This chain is Glycogen synthase, found in Yersinia pestis bv. Antiqua (strain Antiqua).